The primary structure comprises 650 residues: DNA topoisomerase 3 (650 aa).

A Toprim domain is found at 1–134 (MRLFIAEKPS…KLNQIQRCLI (134 aa)). Mg(2+) contacts are provided by glutamate 7, aspartate 103, and aspartate 105. Positions 155 to 617 (FIPLATSALA…TLTNFLPELM (463 aa)) constitute a Topo IA-type catalytic domain. Residues 194–199 (SVGRVQ) form an interaction with DNA region. The active-site O-(5'-phospho-DNA)-tyrosine intermediate is the tyrosine 342.

Belongs to the type IA topoisomerase family. Requires Mg(2+) as cofactor.

The catalysed reaction is ATP-independent breakage of single-stranded DNA, followed by passage and rejoining.. Functionally, releases the supercoiling and torsional tension of DNA, which is introduced during the DNA replication and transcription, by transiently cleaving and rejoining one strand of the DNA duplex. Introduces a single-strand break via transesterification at a target site in duplex DNA. The scissile phosphodiester is attacked by the catalytic tyrosine of the enzyme, resulting in the formation of a DNA-(5'-phosphotyrosyl)-enzyme intermediate and the expulsion of a 3'-OH DNA strand. The free DNA strand then undergoes passage around the unbroken strand, thus removing DNA supercoils. Finally, in the religation step, the DNA 3'-OH attacks the covalent intermediate to expel the active-site tyrosine and restore the DNA phosphodiester backbone. In Pasteurella multocida (strain Pm70), this protein is DNA topoisomerase 3.